The sequence spans 264 residues: MTMTATMTTPLVLKLGGALLENETALEQLFTALSEYKSTSSRPLVLVHGGGCFVDELLAKMNIVSEKKNGLRITPFSDIGYITGALAGTANKVLMAQGLKSGAKVVGLSLADGGIATVTQSTAGLGAVGECEAGDPTLLTALLSGGFLPIISSIGIDAQGQLLNVNADQAATAICETLDADLVMLSDVAGILDADMQLIPEMNSNYAAELIAAGVINGGMEVKVKAALKAAASLNRDIKLASWKVPERLVALLNGEVEGTKVSS.

Substrate-binding positions include 50–51 (GG), R72, and N164.

The protein belongs to the acetylglutamate kinase family. ArgB subfamily.

It is found in the cytoplasm. It catalyses the reaction N-acetyl-L-glutamate + ATP = N-acetyl-L-glutamyl 5-phosphate + ADP. It participates in amino-acid biosynthesis; L-arginine biosynthesis; N(2)-acetyl-L-ornithine from L-glutamate: step 2/4. Its function is as follows. Catalyzes the ATP-dependent phosphorylation of N-acetyl-L-glutamate. The chain is Acetylglutamate kinase from Moritella profunda.